Here is a 398-residue protein sequence, read N- to C-terminus: Acetate kinase (398 aa).

Asparagine 9 is a Mg(2+) binding site. An ATP-binding site is contributed by lysine 16. Arginine 93 is a binding site for substrate. Aspartate 150 acts as the Proton donor/acceptor in catalysis. ATP contacts are provided by residues 209–213, 284–286, and 329–333; these read HLGAG, DMR, and GIGEH. Mg(2+) is bound at residue glutamate 382.

Belongs to the acetokinase family. As to quaternary structure, homodimer. Mg(2+) is required as a cofactor. The cofactor is Mn(2+).

The protein resides in the cytoplasm. The catalysed reaction is acetate + ATP = acetyl phosphate + ADP. The protein operates within metabolic intermediate biosynthesis; acetyl-CoA biosynthesis; acetyl-CoA from acetate: step 1/2. Its function is as follows. Catalyzes the formation of acetyl phosphate from acetate and ATP. Can also catalyze the reverse reaction. This Rhodopseudomonas palustris (strain TIE-1) protein is Acetate kinase.